A 235-amino-acid chain; its full sequence is Small ribosomal subunit protein uS2 (235 aa).

The protein belongs to the universal ribosomal protein uS2 family.

The protein is Small ribosomal subunit protein uS2 of Geobacillus kaustophilus (strain HTA426).